Consider the following 1108-residue polypeptide: Transmembrane protein 132C (1108 aa).

Positions 1 to 27 (MRSEGAAPGPAAPLCGALSLLLGALLG) are cleaved as a signal peptide. Topologically, residues 28–922 (KVIEGHGVTD…LVQTPRGLSD (895 aa)) are extracellular. Asparagine 316 and asparagine 373 each carry an N-linked (GlcNAc...) asparagine glycan. Residues 820–836 (HASDRRQKGQHHERTGQ) show a composition bias toward basic and acidic residues. A disordered region spans residues 820 to 857 (HASDRRQKGQHHERTGQDGHLYGSSPVEREEGALRRAT). The helical transmembrane segment at 923 to 943 (LEIGMYALLGVFCLAILVFLI) threads the bilayer. Over 944-1108 (NCATFALKYR…NYLEKLKDKA (165 aa)) the chain is Cytoplasmic. Residues 1022-1072 (QSQIHRSADSGGRQGREQKQDPLHSPTSKRKKVKFTTFTTIPPDDSCPTVN) form a disordered region.

This sequence belongs to the TMEM132 family.

Its subcellular location is the membrane. The polypeptide is Transmembrane protein 132C (TMEM132C) (Homo sapiens (Human)).